The chain runs to 457 residues: C4-dicarboxylate transport protein (457 aa).

7 helical membrane passes run 20–42 (LYFQVVVAIVLGALLGHFEPAFA), 51–73 (AFIKLVKMIIAPVIFLTIVTGIA), 88–110 (AMAYFLFFSTLALVVGLVVAHVV), 138–158 (LTLVGFLMDIIPNSLIGAFTG), 166–188 (LTGPNILQVLFVAVLFGVSLALV), 212–234 (ILMRAAPIGAFGAIAFTIGKYGV), and 241–263 (AWLVGSFYLTSLLFVLVILGLVS).

Belongs to the dicarboxylate/amino acid:cation symporter (DAACS) (TC 2.A.23) family.

The protein localises to the cell inner membrane. In terms of biological role, responsible for the transport of dicarboxylates such as succinate, fumarate, and malate from the periplasm across the membrane. The chain is C4-dicarboxylate transport protein from Xanthomonas axonopodis pv. citri (strain 306).